An 863-amino-acid chain; its full sequence is Chromatin assembly factor 1 subunit A (863 aa).

Disordered stretches follow at residues 1–353 (MVVV…EEKD), 423–466 (LNGL…PDRS), 513–579 (DSDE…RQRM), and 749–863 (VTRD…PATA). The span at 42-54 (LNPEPKECNEPKR) shows a compositional bias: basic and acidic residues. Position 111 is a phosphothreonine (Thr111). Ser118 is subject to Phosphoserine. Low complexity predominate over residues 144–154 (SEGTTEPTIPL). 2 stretches are compositionally biased toward acidic residues: residues 155–168 (TEEE…EDVD) and 177–196 (QDSD…EQQQ). The segment covering 205–237 (ESVLSTGSTSSASVIASSPEPSKSAPTTPASTS) has biased composition (low complexity). Composition is skewed to basic and acidic residues over residues 254-353 (QEQE…EEKD) and 457-466 (QKADDGPDRS). Acidic residues-rich tracts occupy residues 513 to 524 (DSDEEWEEEEPG) and 532 to 547 (GDDD…DDDG). The span at 569-579 (DPEKQKVRQRM) shows a compositional bias: basic and acidic residues. Residues 760–771 (NSPTTNSSTTPS) are compositionally biased toward low complexity. Positions 806 to 815 (DTEDDEDDDC) are enriched in acidic residues. Residues 821–835 (QSGSSEQDINTSLPQ) show a composition bias toward polar residues. The segment covering 850-863 (TAALALPCPTPATA) has biased composition (low complexity).

Belongs to the CHAF1A family.

The protein localises to the nucleus. Functionally, acts as a component of the histone chaperone complex chromatin assembly factor 1 (CAF-1), which assembles histone octamers onto DNA during replication and repair. CAF-1 performs the first step of the nucleosome assembly process, bringing newly synthesized histones H3 and H4 to replicating DNA; histones H2A/H2B can bind to this chromatin precursor subsequent to DNA replication to complete the histone octamer. This chain is Chromatin assembly factor 1 subunit A (chaf1a), found in Danio rerio (Zebrafish).